Here is a 122-residue protein sequence, read N- to C-terminus: Large ribosomal subunit protein uL18 (122 aa).

The tract at residues 1 to 24 (MLKKADKNANRLQRHKRVRRKISG) is disordered. Residues 12–22 (LQRHKRVRRKI) are compositionally biased toward basic residues.

The protein belongs to the universal ribosomal protein uL18 family. As to quaternary structure, part of the 50S ribosomal subunit; part of the 5S rRNA/L5/L18/L25 subcomplex. Contacts the 5S and 23S rRNAs.

This is one of the proteins that bind and probably mediate the attachment of the 5S RNA into the large ribosomal subunit, where it forms part of the central protuberance. This Clostridioides difficile (strain 630) (Peptoclostridium difficile) protein is Large ribosomal subunit protein uL18.